The primary structure comprises 104 residues: Succinate dehydrogenase assembly factor 4, mitochondrial (104 aa).

Residues 1 to 30 constitute a mitochondrion transit peptide; the sequence is MVSTTLSVSRMTFVWRAARPSLLNHSLRKM. Residues 29–104 form a disordered region; the sequence is KMSYQEGKPE…WERKGRCIDF (76 aa). Composition is skewed to basic and acidic residues over residues 63-83 and 91-104; these read EREP…EKGG and RYGD…CIDF.

This sequence belongs to the SDHAF4 family. In terms of assembly, interacts with Sdha in its FAD-bound form.

The protein localises to the mitochondrion matrix. In terms of biological role, plays an essential role in the assembly of succinate dehydrogenase (SDH), an enzyme complex (also referred to as respiratory complex II) that is a component of both the tricarboxylic acid (TCA) cycle and the mitochondrial electron transport chain, and which couples the oxidation of succinate to fumarate with the reduction of ubiquinone (coenzyme Q) to ubiquinol. Binds to the flavoprotein subunit Sdha in its FAD-bound form, blocking the generation of excess reactive oxygen species (ROS) and facilitating its assembly with the iron-sulfur protein subunit Sdhb into the SDH catalytic dimer. This Mus musculus (Mouse) protein is Succinate dehydrogenase assembly factor 4, mitochondrial.